A 396-amino-acid chain; its full sequence is 1-deoxy-D-xylulose 5-phosphate reductoisomerase (396 aa).

Residues Thr13, Gly14, Ser15, Ile16, and Asn127 each contribute to the NADPH site. Lys128 is a 1-deoxy-D-xylulose 5-phosphate binding site. Glu129 serves as a coordination point for NADPH. Residue Asp153 participates in Mn(2+) binding. 4 residues coordinate 1-deoxy-D-xylulose 5-phosphate: Ser154, Glu155, Ser184, and His207. Mn(2+) is bound at residue Glu155. Gly213 provides a ligand contact to NADPH. Ser220, Asn225, Lys226, and Glu229 together coordinate 1-deoxy-D-xylulose 5-phosphate. Glu229 contacts Mn(2+).

The protein belongs to the DXR family. It depends on Mg(2+) as a cofactor. Requires Mn(2+) as cofactor.

It carries out the reaction 2-C-methyl-D-erythritol 4-phosphate + NADP(+) = 1-deoxy-D-xylulose 5-phosphate + NADPH + H(+). It participates in isoprenoid biosynthesis; isopentenyl diphosphate biosynthesis via DXP pathway; isopentenyl diphosphate from 1-deoxy-D-xylulose 5-phosphate: step 1/6. Its function is as follows. Catalyzes the NADPH-dependent rearrangement and reduction of 1-deoxy-D-xylulose-5-phosphate (DXP) to 2-C-methyl-D-erythritol 4-phosphate (MEP). This Pseudomonas savastanoi pv. phaseolicola (strain 1448A / Race 6) (Pseudomonas syringae pv. phaseolicola (strain 1448A / Race 6)) protein is 1-deoxy-D-xylulose 5-phosphate reductoisomerase.